The primary structure comprises 122 residues: Large ribosomal subunit protein uL14 (122 aa).

Belongs to the universal ribosomal protein uL14 family. As to quaternary structure, part of the 50S ribosomal subunit. Forms a cluster with proteins L3 and L19. In the 70S ribosome, L14 and L19 interact and together make contacts with the 16S rRNA in bridges B5 and B8.

In terms of biological role, binds to 23S rRNA. Forms part of two intersubunit bridges in the 70S ribosome. This Protochlamydia amoebophila (strain UWE25) protein is Large ribosomal subunit protein uL14.